A 622-amino-acid polypeptide reads, in one-letter code: 1-deoxy-D-xylulose-5-phosphate synthase (622 aa).

Residues His80 and 121-123 each bind thiamine diphosphate; that span reads GHS. Asp152 contacts Mg(2+). Thiamine diphosphate contacts are provided by residues 153 to 154, Asn181, Tyr288, and Glu370; that span reads GA. Residue Asn181 participates in Mg(2+) binding.

Belongs to the transketolase family. DXPS subfamily. In terms of assembly, homodimer. Mg(2+) serves as cofactor. Thiamine diphosphate is required as a cofactor.

The catalysed reaction is D-glyceraldehyde 3-phosphate + pyruvate + H(+) = 1-deoxy-D-xylulose 5-phosphate + CO2. It functions in the pathway metabolic intermediate biosynthesis; 1-deoxy-D-xylulose 5-phosphate biosynthesis; 1-deoxy-D-xylulose 5-phosphate from D-glyceraldehyde 3-phosphate and pyruvate: step 1/1. Catalyzes the acyloin condensation reaction between C atoms 2 and 3 of pyruvate and glyceraldehyde 3-phosphate to yield 1-deoxy-D-xylulose-5-phosphate (DXP). The protein is 1-deoxy-D-xylulose-5-phosphate synthase of Shewanella oneidensis (strain ATCC 700550 / JCM 31522 / CIP 106686 / LMG 19005 / NCIMB 14063 / MR-1).